Consider the following 410-residue polypeptide: Putative competence-damage inducible protein (410 aa).

It belongs to the CinA family.

The chain is Putative competence-damage inducible protein from Finegoldia magna (strain ATCC 29328 / DSM 20472 / WAL 2508) (Peptostreptococcus magnus).